We begin with the raw amino-acid sequence, 161 residues long: Negative cofactor 2 complex subunit beta (161 aa).

Residues 11–75 (SLPKATVQKM…IAAEHIIKAL (65 aa)) enclose the Histone-fold domain. Over residues 93–107 (EHKEQQKNREKKSSK) the composition is skewed to basic and acidic residues. Disordered regions lie at residues 93-116 (EHKE…VSRD) and 130-161 (RERF…TKEN). Residues 135–147 (NQNIAHDNHTTTA) are compositionally biased toward polar residues.

Belongs to the NC2 beta/DR1 family.

It is found in the cytoplasm. The protein resides in the nucleus. This is Negative cofactor 2 complex subunit beta (ncb2) from Schizosaccharomyces pombe (strain 972 / ATCC 24843) (Fission yeast).